The primary structure comprises 553 residues: MTRLDNSRVIRPATGPEISAKSWLTEAPMRMLMNNLHPDVAEAPHELVVYGGIGRAARDWESYDRIVETLRRLEGDETLLIQSGKPVGVFRTHADAPRVLLANSNLVPQWANWEHFHELDKKGLMMYGQMTAGSWIYIGSQGIVQGTYETFVEMGRQHYGGDLSGRWLLTAGLGGMGGAQPLAAVMAGASCLAIECQPSRIEMRLRTGYLDRQAASIDEALAMIEASHAEDKPVSVGLLGNAAEILPEIVRRGIRPDLLTDQTSAHDPVNGYLPAGWSLDQWFAKRESDPSAVAKAAKASMAVHVRAMLDLHAAGVPTTDYGNNIRQMAKDEGVENAFDFPGFVPAYVRPLFCRGIGPFRWVALSGDPEDIYRTDARVKQLLPDNTHLHNWLDMARERIQFQGLPARICWVGLGDRHRLGLAFNEMVASGELKAPIVIGRDHLDSGSVASPNRETEAMRDGSDAVSDWPLLNALLNTASGATWVSLHHGGGVGMGYSQHSGMVIVADGTPEAAKRLERVLWNDPGTGVMRHADAGYDIAIDCAREKGLDLPSI.

NAD(+)-binding positions include 51-52 (GG), glutamine 129, 175-177 (GMG), glutamate 195, arginine 200, 241-242 (NA), 262-266 (QTSAH), 272-273 (YL), and tyrosine 321. Cysteine 409 is an active-site residue. An NAD(+)-binding site is contributed by glycine 491.

It belongs to the urocanase family. NAD(+) serves as cofactor.

It localises to the cytoplasm. It carries out the reaction 4-imidazolone-5-propanoate = trans-urocanate + H2O. Its pathway is amino-acid degradation; L-histidine degradation into L-glutamate; N-formimidoyl-L-glutamate from L-histidine: step 2/3. Its function is as follows. Catalyzes the conversion of urocanate to 4-imidazolone-5-propionate. This chain is Urocanate hydratase, found in Sphingopyxis alaskensis (strain DSM 13593 / LMG 18877 / RB2256) (Sphingomonas alaskensis).